The chain runs to 218 residues: Small ribosomal subunit protein uS5 (218 aa).

A disordered region spans residues 1 to 49; sequence MPGRQRRDGGSGPAGQNGPNTGDNRGGGDRRGGGRDDRRGGQSAEKSNH. Basic and acidic residues predominate over residues 26–49; the sequence is GGGDRRGGGRDDRRGGQSAEKSNH. One can recognise an S5 DRBM domain in the interval 49 to 112; that stretch reads HIERVVTINR…EEARKSFFRV (64 aa).

This sequence belongs to the universal ribosomal protein uS5 family. Part of the 30S ribosomal subunit. Contacts proteins S4 and S8.

Its function is as follows. With S4 and S12 plays an important role in translational accuracy. Functionally, located at the back of the 30S subunit body where it stabilizes the conformation of the head with respect to the body. The chain is Small ribosomal subunit protein uS5 from Rhodococcus jostii (strain RHA1).